Consider the following 329-residue polypeptide: Oxidoreductase sirO (329 aa).

D54 is a binding site for NADP(+). Y59 serves as the catalytic Proton donor. Substrate is bound at residue H118. Residues 148–149 (SN), Q174, 203–213 (SPLCCGLLINA), and 288–296 (SSARQLEES) contribute to the NADP(+) site.

It belongs to the aldo/keto reductase family. Aldo/keto reductase 2 subfamily.

Its pathway is mycotoxin biosynthesis. In terms of biological role, oxidoreductase; part of the gene cluster that mediates the biosynthesis of sirodesmin PL, an epipolythiodioxopiperazine (ETP) characterized by a disulfide bridged cyclic dipeptide and that acts as a phytotoxin which is involved in the blackleg didease of canola. SirD catalyzes the O-prenylation of L-tyrosine (L-Tyr) in the presence of dimethylallyl diphosphate (DMAPP) to yield 4-O-dimethylallyl-L-Tyr, and therefore represents probably the first pathway-specific enzyme in the biosynthesis of sirodesmin PL. 4-O-dimethylallyl-L-Tyr, then undergoes condensation with L-Ser in a reaction catalyzed by the non-ribosomal peptide synthase sirP to form the diketopiperazine (DKP) backbone. Further bishydroxylation of the DKP performed by the cytochrome P450 monooxygenase sirC leads to the production of the intermediate phomamide. This step is essential to form the reactive thiol group required for toxicity of sirodesmin PL. The next steps of sirodesmin biosynthesis are not well understood yet, but some predictions could be made from intermediate compounds identification. Phomamide is converted into phomalizarine via oxidation, probably by sirT. Further oxidation, methylation (by sirM or sirN) and reduction steps convert phomalizarine to deacetyl sirodesmin. Finally, acetyltransferase sirH probably acetylates deacetyl sirodesmin to produce sirodesmin PL. The sequence is that of Oxidoreductase sirO from Leptosphaeria maculans (Blackleg fungus).